The primary structure comprises 255 residues: Myogenic factor 5 (255 aa).

The bHLH domain maps to 83–134 (DRRKAATMRERRRLKKVNQAFETLKRCTTTNPNQRLPKVEILRNAIRYIESL). A disordered region spans residues 226–249 (DTASLSPATSANSQPATPGPSSSR).

In terms of assembly, efficient DNA binding requires dimerization with another bHLH protein.

It localises to the nucleus. Its function is as follows. Acts as a transcriptional activator that promotes transcription of muscle-specific target genes and plays a role in muscle differentiation. Together with MYOG and MYOD1, co-occupies muscle-specific gene promoter core region during myogenesis. Induces fibroblasts to differentiate into myoblasts. Probable sequence specific DNA-binding protein. The protein is Myogenic factor 5 (Myf5) of Mus musculus (Mouse).